Reading from the N-terminus, the 194-residue chain is Adenylate kinase (194 aa).

10-15 (GAGKGT) lines the ATP pocket. The segment at 30-59 (STGDMLRAAVAQQSEIGKRAKAVMDAGQLV) is NMP. AMP contacts are provided by residues T31, R36, 57–59 (QLV), 85–88 (GYPR), and Q92. Residues 126-142 (SRVAETIAKGGQVRSDD) form an LID region. Position 127 (R127) interacts with ATP. AMP is bound by residues R139 and R150. An ATP-binding site is contributed by A178.

Belongs to the adenylate kinase family. As to quaternary structure, monomer.

The protein resides in the cytoplasm. The catalysed reaction is AMP + ATP = 2 ADP. The protein operates within purine metabolism; AMP biosynthesis via salvage pathway; AMP from ADP: step 1/1. Its function is as follows. Catalyzes the reversible transfer of the terminal phosphate group between ATP and AMP. Plays an important role in cellular energy homeostasis and in adenine nucleotide metabolism. This is Adenylate kinase from Brucella canis (strain ATCC 23365 / NCTC 10854 / RM-666).